Consider the following 314-residue polypeptide: 4-hydroxy-3-methylbut-2-enyl diphosphate reductase (314 aa).

Cys-12 contributes to the [4Fe-4S] cluster binding site. 2 residues coordinate (2E)-4-hydroxy-3-methylbut-2-enyl diphosphate: His-41 and His-74. The dimethylallyl diphosphate site is built by His-41 and His-74. The isopentenyl diphosphate site is built by His-41 and His-74. Cys-96 provides a ligand contact to [4Fe-4S] cluster. Position 124 (His-124) interacts with (2E)-4-hydroxy-3-methylbut-2-enyl diphosphate. His-124 serves as a coordination point for dimethylallyl diphosphate. Position 124 (His-124) interacts with isopentenyl diphosphate. The active-site Proton donor is the Glu-126. Thr-167 serves as a coordination point for (2E)-4-hydroxy-3-methylbut-2-enyl diphosphate. Position 197 (Cys-197) interacts with [4Fe-4S] cluster. Ser-225, Ser-226, Asn-227, and Ser-269 together coordinate (2E)-4-hydroxy-3-methylbut-2-enyl diphosphate. Residues Ser-225, Ser-226, Asn-227, and Ser-269 each coordinate dimethylallyl diphosphate. Isopentenyl diphosphate is bound by residues Ser-225, Ser-226, Asn-227, and Ser-269.

This sequence belongs to the IspH family. [4Fe-4S] cluster is required as a cofactor.

It carries out the reaction isopentenyl diphosphate + 2 oxidized [2Fe-2S]-[ferredoxin] + H2O = (2E)-4-hydroxy-3-methylbut-2-enyl diphosphate + 2 reduced [2Fe-2S]-[ferredoxin] + 2 H(+). The catalysed reaction is dimethylallyl diphosphate + 2 oxidized [2Fe-2S]-[ferredoxin] + H2O = (2E)-4-hydroxy-3-methylbut-2-enyl diphosphate + 2 reduced [2Fe-2S]-[ferredoxin] + 2 H(+). The protein operates within isoprenoid biosynthesis; dimethylallyl diphosphate biosynthesis; dimethylallyl diphosphate from (2E)-4-hydroxy-3-methylbutenyl diphosphate: step 1/1. It functions in the pathway isoprenoid biosynthesis; isopentenyl diphosphate biosynthesis via DXP pathway; isopentenyl diphosphate from 1-deoxy-D-xylulose 5-phosphate: step 6/6. Its function is as follows. Catalyzes the conversion of 1-hydroxy-2-methyl-2-(E)-butenyl 4-diphosphate (HMBPP) into a mixture of isopentenyl diphosphate (IPP) and dimethylallyl diphosphate (DMAPP). Acts in the terminal step of the DOXP/MEP pathway for isoprenoid precursor biosynthesis. The chain is 4-hydroxy-3-methylbut-2-enyl diphosphate reductase from Aliivibrio fischeri (strain ATCC 700601 / ES114) (Vibrio fischeri).